Consider the following 1643-residue polypeptide: Lysine-specific demethylase 6B (1643 aa).

Disordered stretches follow at residues 52-88 (GQPP…PLHG), 190-680 (AKRG…PLED), 704-807 (ESIR…LKSL), and 822-1096 (GAAV…RSLS). Composition is skewed to low complexity over residues 63–74 (SHGSSSGHPSKP) and 212–223 (AALSGPSGEEGL). Ser224 is subject to Phosphoserine. Residues 242 to 266 (PGLPLPPPPLPPPPPPPPPPPPPLP) are compositionally biased toward pro residues. Over residues 291–307 (GPERKGSAPPERQEQRH) the composition is skewed to basic and acidic residues. Pro residues predominate over residues 332 to 342 (AAPPGPGPRPP). Positions 359 to 370 (DLRESRVQRSRM) are enriched in basic and acidic residues. The span at 394–412 (PGTTTSSSSSSSSNTGLRG) shows a compositional bias: low complexity. A compositionally biased stretch (pro residues) spans 460–484 (SLPPGPSSPPPPPCPRLLRPPPPPA). A compositionally biased stretch (low complexity) spans 550 to 569 (TTSSSNSNSGSHSSSPAGPV). Composition is skewed to pro residues over residues 584–600 (LPRP…PPLV) and 641–658 (GPGP…PVPP). Basic and acidic residues predominate over residues 704 to 714 (ESIRKEEEQQQ). The span at 740–764 (TAPTTTAPAVAVTTTTTTTTTTTAT) shows a compositional bias: low complexity. Over residues 772 to 800 (PPALPPPPPLAKFPPPSQPQPPPPPPPSP) the composition is skewed to pro residues. The segment covering 843-877 (SGATALPPTSAAPSAQGSPQPSASSSSQFSTSGGP) has biased composition (low complexity). Residues 889-904 (VPGPMTPTQPPPPLSL) show a composition bias toward pro residues. Basic and acidic residues predominate over residues 916–929 (EISRACETLVERVG). Positions 972–989 (CKRRQKEHQKEHRRHRRA) are enriched in basic residues. The segment covering 990–1003 (CKDSVGRRPREGRA) has biased composition (basic and acidic residues). Basic residues predominate over residues 1004 to 1016 (KAKAKVPKEKSRR). Over residues 1047–1067 (PTAPAPPSAPAPSAQPTPPSA) the composition is skewed to pro residues. Lys1109 participates in a covalent cross-link: Glycyl lysine isopeptide (Lys-Gly) (interchain with G-Cter in SUMO2). A disordered region spans residues 1288 to 1325 (FQESLQEEKESEDEESEEPDSTTGTPPSSAPDPKNHHI). A compositionally biased stretch (acidic residues) spans 1296 to 1307 (KESEDEESEEPD). The region spanning 1339–1502 (RWKPQLQELL…YQLALERYEW (164 aa)) is the JmjC domain. 3 residues coordinate Fe cation: His1390, Glu1392, and His1470. Zn(2+) is bound by residues Cys1575, Cys1578, Cys1602, and Cys1605.

The protein belongs to the UTX family. In terms of assembly, interacts with TLE1. Component of the MLL4 complex, at least composed of KMT2B/MLL4, ASH2L, RBBP5, WDR5, and KDM6B. Interacts with TBX21, SMARCA4, SMARCC1 and SMARCC2. It depends on L-ascorbate as a cofactor. Fe(2+) is required as a cofactor.

It localises to the nucleus. The catalysed reaction is N(6),N(6),N(6)-trimethyl-L-lysyl(27)-[histone H3] + 2 2-oxoglutarate + 2 O2 = N(6)-methyl-L-lysyl(27)-[histone H3] + 2 formaldehyde + 2 succinate + 2 CO2. Functionally, histone demethylase that specifically demethylates 'Lys-27' of histone H3, thereby playing a central role in histone code. Demethylates trimethylated and dimethylated H3 'Lys-27'. Plays a central role in regulation of posterior development, by regulating HOX gene expression. Involved in inflammatory response by participating in macrophage differentiation in case of inflammation by regulating gene expression and macrophage differentiation. Plays a demethylase-independent role in chromatin remodeling to regulate T-box family member-dependent gene expression by acting as a link between T-box factors and the SMARCA4-containing SWI/SNF remodeling complex. The sequence is that of Lysine-specific demethylase 6B (KDM6B) from Homo sapiens (Human).